The following is a 288-amino-acid chain: UDP-3-O-acyl-N-acetylglucosamine deacetylase (288 aa).

The Zn(2+) site is built by His79, His236, and Asp240. The active-site Proton donor is His263.

Belongs to the LpxC family. The cofactor is Zn(2+).

The enzyme catalyses a UDP-3-O-[(3R)-3-hydroxyacyl]-N-acetyl-alpha-D-glucosamine + H2O = a UDP-3-O-[(3R)-3-hydroxyacyl]-alpha-D-glucosamine + acetate. It functions in the pathway glycolipid biosynthesis; lipid IV(A) biosynthesis; lipid IV(A) from (3R)-3-hydroxytetradecanoyl-[acyl-carrier-protein] and UDP-N-acetyl-alpha-D-glucosamine: step 2/6. Functionally, catalyzes the hydrolysis of UDP-3-O-myristoyl-N-acetylglucosamine to form UDP-3-O-myristoylglucosamine and acetate, the committed step in lipid A biosynthesis. The protein is UDP-3-O-acyl-N-acetylglucosamine deacetylase of Rickettsia prowazekii (strain Madrid E).